A 607-amino-acid chain; its full sequence is Proteasome-associated ATPase (607 aa).

Positions 1–17 (MTESDRHDTPKGDRRIS) are enriched in basic and acidic residues. Positions 1-65 (MTESDRHDTP…GRPAADNKEL (65 aa)) are disordered. Residues 59 to 102 (AADNKELQERVDNLTARNAKLLDTLKDARQQLVALREEVDRLGQ) adopt a coiled-coil conformation. 294–299 (GCGKTL) is an ATP binding site. Positions 606–607 (YL) are docks into pockets in the proteasome alpha-ring.

This sequence belongs to the AAA ATPase family. In terms of assembly, homohexamer. Assembles into a hexameric ring structure that caps the 20S proteasome core. Strongly interacts with the prokaryotic ubiquitin-like protein Pup through a hydrophobic interface; the interacting region of ARC lies in its N-terminal coiled-coil domain. There is one Pup binding site per ARC hexamer ring. Upon ATP-binding, the C-terminus of ARC interacts with the alpha-rings of the proteasome core, possibly by binding to the intersubunit pockets.

It functions in the pathway protein degradation; proteasomal Pup-dependent pathway. In terms of biological role, ATPase which is responsible for recognizing, binding, unfolding and translocation of pupylated proteins into the bacterial 20S proteasome core particle. May be essential for opening the gate of the 20S proteasome via an interaction with its C-terminus, thereby allowing substrate entry and access to the site of proteolysis. Thus, the C-termini of the proteasomal ATPase may function like a 'key in a lock' to induce gate opening and therefore regulate proteolysis. The polypeptide is Proteasome-associated ATPase (Gordonia bronchialis (strain ATCC 25592 / DSM 43247 / BCRC 13721 / JCM 3198 / KCTC 3076 / NBRC 16047 / NCTC 10667) (Rhodococcus bronchialis)).